Reading from the N-terminus, the 538-residue chain is [Pyruvate dehydrogenase [acetyl-transferring]]-phosphatase 1, mitochondrial (538 aa).

Residues 1 to 71 constitute a mitochondrion transit peptide; sequence MPAPTQLFFP…WWQYTQGRRY (71 aa). The region spanning 109–525 is the PPM-type phosphatase domain; that stretch reads ILGFDSNQLP…DDITIIVVQF (417 aa). Residues aspartate 144 and glycine 145 each coordinate Mn(2+). At lysine 202 the chain carries N6-acetyllysine. Residues aspartate 418 and aspartate 516 each contribute to the Mn(2+) site.

The protein belongs to the PP2C family. Heterodimer of a catalytic (PDP1) and a regulatory (PDPR) subunit. Mn(2+) serves as cofactor. It depends on Mg(2+) as a cofactor.

The protein localises to the mitochondrion. It carries out the reaction O-phospho-L-seryl-[pyruvate dehydrogenase E1 alpha subunit] + H2O = L-seryl-[pyruvate dehydrogenase E1 alpha subunit] + phosphate. With respect to regulation, magnesium-dependent and calcium-stimulated. PDP1 activity strongly depends on its Ca(2+)-dependent binding to the lipoyl domain of E2 subunit of component of the pyruvate dehydrogenase complex. Its function is as follows. Mitochondrial enzyme that catalyzes the dephosphorylation and concomitant reactivation of the alpha subunit of the E1 component of the pyruvate dehydrogenase complex (PDC), thereby stimulating the conversion of pyruvate into acetyl-CoA. The sequence is that of [Pyruvate dehydrogenase [acetyl-transferring]]-phosphatase 1, mitochondrial (Pdp1) from Mus musculus (Mouse).